Here is a 229-residue protein sequence, read N- to C-terminus: MADTPVSAPVVPEVTERKSKRGTKAAAVKVPKEKKKVIAAKKPKSKGTSSHPSFFEMISDAISTLKERTGSSQYAINKFVEDKHKQLPSNFRKLLLFHLKKLVASGKLVKVKNSFKLPSARAAPAPALAKKPTIPKPKVAAKPKTAKIGAKPKAKAKVAAKTKATTKTVAKKIPAAKPKAKTAGKPKTVAAKPAKVAKTAAVASPGKKKAVPVKKVKTVKSPAGKRTRK.

Disordered stretches follow at residues 1–52 and 125–229; these read MADT…SSHP and APAL…RTRK. Residues 32–45 show a composition bias toward basic residues; that stretch reads KEKKKVIAAKKPKS. The 70-residue stretch at 50-119 folds into the H15 domain; that stretch reads SHPSFFEMIS…KVKNSFKLPS (70 aa). Low complexity predominate over residues 125-138; it reads APALAKKPTIPKPK. Residues 139 to 160 show a composition bias toward basic residues; that stretch reads VAAKPKTAKIGAKPKAKAKVAA. Low complexity-rich tracts occupy residues 161–177 and 185–205; these read KTKA…PAAK and KPKT…VASP. Residues 206-229 are compositionally biased toward basic residues; it reads GKKKAVPVKKVKTVKSPAGKRTRK.

Belongs to the histone H1/H5 family.

The protein localises to the nucleus. It is found in the chromosome. Its function is as follows. Histones H1 are necessary for the condensation of nucleosome chains into higher-order structures. The protein is Histone H1 of Euphorbia esula (Leafy spurge).